Reading from the N-terminus, the 505-residue chain is 2,3-bisphosphoglycerate-independent phosphoglycerate mutase (505 aa).

Mn(2+) is bound by residues Asp12 and Ser62. Ser62 functions as the Phosphoserine intermediate in the catalytic mechanism. Substrate-binding positions include His123, 153-154 (RD), Arg185, Arg191, 257-260 (RPDR), and Lys330. Mn(2+) contacts are provided by Asp397, His401, Asp438, His439, and His456.

Belongs to the BPG-independent phosphoglycerate mutase family. In terms of assembly, monomer. Requires Mn(2+) as cofactor.

It catalyses the reaction (2R)-2-phosphoglycerate = (2R)-3-phosphoglycerate. Its pathway is carbohydrate degradation; glycolysis; pyruvate from D-glyceraldehyde 3-phosphate: step 3/5. Functionally, catalyzes the interconversion of 2-phosphoglycerate and 3-phosphoglycerate. The polypeptide is 2,3-bisphosphoglycerate-independent phosphoglycerate mutase (Staphylococcus haemolyticus (strain JCSC1435)).